A 430-amino-acid chain; its full sequence is MKSIYSLVLCTALTAASPHPAFPQSPLGVPTTSSPSTGTFNSAEEVINASPFLSFHRDIVQIESISSNEHNVGEFIADFLRARNFTVIEQAVTSSSQRENQERFNVFAYPSSNTPEILITSHIDTVPPFIPYSLDTDSTTDNDPSTIRISGRGSVDAKGSVAAQIFAALDVLEQNPSAPLGLLFVVGEETGGDGMRAFSESSLNPAPSAFHTVIFGEPTELALVSGHKGMLGFEIVAKGHAAHSGYPWLGRSAISAVLPALSRVDQLGNIPADKGGLPSSPKYGNTTVNIGRVDAGVAANVVPATARADVAVRLAAGTPDEARDIVRRAVRDATDGNPDVYAEFNTRSEGYPPQDLDTDVDGFDITTVNYGTDVPNLQIHEREDGPVRRYLYGPGSIHVAHGDNEAITVGDLQEAVRGYRKLIEAALQRR.

The signal sequence occupies residues 1–16 (MKSIYSLVLCTALTAA). The N-linked (GlcNAc...) asparagine glycan is linked to Asn-84. Asp-156 serves as a coordination point for Zn(2+). Glu-188 acts as the Proton acceptor in catalysis. Zn(2+) is bound at residue Glu-189. Asn-285 carries an N-linked (GlcNAc...) asparagine glycan.

The protein belongs to the peptidase M20A family. Zn(2+) is required as a cofactor.

The protein resides in the secreted. The protein is Probable carboxypeptidase AFLA_037450 of Aspergillus flavus (strain ATCC 200026 / FGSC A1120 / IAM 13836 / NRRL 3357 / JCM 12722 / SRRC 167).